An 89-amino-acid chain; its full sequence is Small ribosomal subunit protein uS15 (89 aa).

It belongs to the universal ribosomal protein uS15 family. In terms of assembly, part of the 30S ribosomal subunit. Forms a bridge to the 50S subunit in the 70S ribosome, contacting the 23S rRNA.

One of the primary rRNA binding proteins, it binds directly to 16S rRNA where it helps nucleate assembly of the platform of the 30S subunit by binding and bridging several RNA helices of the 16S rRNA. In terms of biological role, forms an intersubunit bridge (bridge B4) with the 23S rRNA of the 50S subunit in the ribosome. This chain is Small ribosomal subunit protein uS15, found in Mycobacterium sp. (strain JLS).